Reading from the N-terminus, the 255-residue chain is Ras-like protein family member 12 (255 aa).

Residues 30–37 (GAMGSGKS), 77–81 (DTADQ), and 137–140 (NKVD) each bind GTP.

The protein belongs to the small GTPase superfamily. Ras family.

The enzyme catalyses GTP + H2O = GDP + phosphate + H(+). The sequence is that of Ras-like protein family member 12 (RASL12) from Danio rerio (Zebrafish).